Consider the following 231-residue polypeptide: F-box protein SKIP8 (231 aa).

Residues 1 to 24 (MPSTPLANGGTPPMGGGERTTVTT) form a disordered region. The F-box domain maps to 34 to 80 (VSMMEQLVPEITTHALSYLDYPSLCRLSMTNSLMRKAANDDNAWKAL).

Part of a SCF (ASK-cullin-F-box) protein ligase complex. Interacts with SKP1A/ASK1.

It participates in protein modification; protein ubiquitination. Functionally, component of SCF(ASK-cullin-F-box) E3 ubiquitin ligase complexes, which may mediate the ubiquitination and subsequent proteasomal degradation of target proteins. The chain is F-box protein SKIP8 (SKIP8) from Arabidopsis thaliana (Mouse-ear cress).